A 1877-amino-acid polypeptide reads, in one-letter code: Neuron navigator 1 (1877 aa).

Met1 carries the N-acetylmethionine modification. The interval 1 to 59 is disordered; it reads MLGSSVKSVQPEVELSSGGGDEGADEPRGAGRKAAAADGRGMLPKRAKAPGGGGGMAKA. Low complexity predominate over residues 32–41; sequence RKAAAADGRG. Phosphoserine is present on residues Ser90, Ser142, and Ser152. The segment at 114 to 225 is disordered; it reads DMAKAPKGLG…PVPSAKGQEE (112 aa). Residue Thr159 is modified to Phosphothreonine. 2 positions are modified to phosphoserine: Ser194 and Ser199. Low complexity predominate over residues 205-214; that stretch reads SSKAKAQKSS. The stretch at 255–280 forms a coiled coil; that stretch reads ESQRKRTVQNVLDLRQNLEETMSSLR. Residues 294–336 form a disordered region; sequence YDSDDANPRSVSSLSNRSSPLSWRYGQSSPRLQAGDAPSVGGS. Phosphoserine occurs at positions 296, 308, 312, 362, and 391. Low complexity predominate over residues 301–315; that stretch reads PRSVSSLSNRSSPLS. Disordered stretches follow at residues 386–839 and 892–989; these read KSGY…PLPS and MSLP…PMSL. 2 stretches are compositionally biased toward low complexity: residues 411-425 and 433-448; these read DESS…DASD and NASS…PTAS. A phosphoserine mark is found at Ser452, Ser474, Ser476, and Ser490. A compositionally biased stretch (basic and acidic residues) spans 476-486; sequence SEEKAPKKLEY. Positions 503 to 519 are enriched in basic and acidic residues; that stretch reads ERPESCDDSSKGGELKK. Ser528 carries the phosphoserine modification. Position 534 is a phosphothreonine (Thr534). Ser541 carries the post-translational modification Phosphoserine. Phosphothreonine is present on Thr544. Over residues 555 to 566 the composition is skewed to basic and acidic residues; sequence GKPEGKATDKGK. The residue at position 572 (Thr572) is a Phosphothreonine. Positions 581 to 591 are enriched in basic and acidic residues; it reads AGRDRLSDAKK. 2 stretches are compositionally biased toward polar residues: residues 615 to 635 and 645 to 655; these read GTAT…QKSS and RKTSLDVSNSA. Residue Ser648 is modified to Phosphoserine. Arg688 is subject to Omega-N-methylarginine. Composition is skewed to polar residues over residues 698–710 and 724–733; these read IDPS…QGGL and GRTTPAPVNQ. Positions 731–756 form a coiled coil; sequence VNQTDREKEKAKAKAVALDSDNISLK. Phosphoserine occurs at positions 750, 754, 760, 797, and 808. The segment covering 751–773 has biased composition (polar residues); that stretch reads DNISLKSIGSPESTPKNQASHPT. Residues 805 to 818 are compositionally biased toward low complexity; the sequence is NSNSLDLPSSSDTT. Residues 902–913 show a composition bias toward pro residues; the sequence is TPVPTPPAPPAA. Ser1000 carries the post-translational modification Phosphoserine. A Phosphothreonine modification is found at Thr1006. A coiled-coil region spans residues 1072–1163; sequence SSAEERMQSE…SEAQAVIQGA (92 aa). Position 1170 is a phosphothreonine (Thr1170). Disordered stretches follow at residues 1172–1204, 1244–1306, 1359–1383, and 1810–1843; these read KELR…KDAD, ATPD…EKKE, LKVA…LSSP, and KLYH…SLDS. Ser1181 carries the post-translational modification Phosphoserine. Residues 1181 to 1200 are compositionally biased toward low complexity; that stretch reads SSDSISSLNSITSHSSIGSS. The span at 1246 to 1264 shows a compositional bias: polar residues; it reads PDSSAPSSPKLQHGSTETA. Phosphoserine is present on Ser1265. A compositionally biased stretch (low complexity) spans 1265 to 1275; that stretch reads SPSIKSSTSSS. A coiled-coil region spans residues 1303-1362; that stretch reads EKKEVSELRSELWEKEMKLTDIRLEALNSAHQLDQLRETMHNMQLEVDLLKAENDRLKVA. The segment covering 1366–1383 has biased composition (polar residues); the sequence is SSGSTPGQVPGSSALSSP. Ser1382 carries the post-translational modification Phosphoserine.

This sequence belongs to the Nav/unc-53 family. Interacts with tubulin. In terms of tissue distribution, broadly expressed at low levels. Expressed at high levels in heart, skeletal muscle and placenta.

The protein localises to the cytoplasm. Its subcellular location is the cytoskeleton. May be involved in neuronal migration. This Homo sapiens (Human) protein is Neuron navigator 1 (NAV1).